The chain runs to 123 residues: Large ribosomal subunit protein bL12 (123 aa).

The protein belongs to the bacterial ribosomal protein bL12 family. In terms of assembly, homodimer. Part of the ribosomal stalk of the 50S ribosomal subunit. Forms a multimeric L10(L12)X complex, where L10 forms an elongated spine to which 2 to 4 L12 dimers bind in a sequential fashion. Binds GTP-bound translation factors.

In terms of biological role, forms part of the ribosomal stalk which helps the ribosome interact with GTP-bound translation factors. Is thus essential for accurate translation. The sequence is that of Large ribosomal subunit protein bL12 from Borrelia turicatae (strain 91E135).